Reading from the N-terminus, the 93-residue chain is UPF0457 protein GTNG_2792 (93 aa).

This sequence belongs to the UPF0457 family.

This chain is UPF0457 protein GTNG_2792, found in Geobacillus thermodenitrificans (strain NG80-2).